A 211-amino-acid chain; its full sequence is Neuroendocrine protein 7B2 (211 aa).

Residues 1-26 (MVSRMVSTMLSGLLFWLASGWTPAFA) form the signal peptide. A disordered region spans residues 106 to 132 (DFSEDQGYPDPPNPCPVGKTDDGCLEN). C120 and C129 are joined by a disulfide. S140 and S204 each carry phosphoserine. Positions 173–211 (GGERRKRRSVNPYLQGQRLDNVVAKKSVPHFSDEDKDPE) are disordered.

It belongs to the 7B2 family. As to quaternary structure, interacts with PCSK2/PC2 early in the secretory pathway. Dissociation occurs at later stages. Proteolytically cleaved in the Golgi by a furin-like convertase to generate bioactive peptides. Post-translationally, sulfated on tyrosine residues.

The protein resides in the secreted. Its function is as follows. Acts as a molecular chaperone for PCSK2/PC2, preventing its premature activation in the regulated secretory pathway. Binds to inactive PCSK2 in the endoplasmic reticulum and facilitates its transport from there to later compartments of the secretory pathway where it is proteolytically matured and activated. Also required for cleavage of PCSK2 but does not appear to be involved in its folding. Plays a role in regulating pituitary hormone secretion. The C-terminal peptide inhibits PCSK2 in vitro. The chain is Neuroendocrine protein 7B2 (SCG5) from Pan troglodytes (Chimpanzee).